A 665-amino-acid polypeptide reads, in one-letter code: Coiled-coil domain-containing protein 138 (665 aa).

Thr48 is subject to Phosphothreonine. The residue at position 49 (Ser49) is a Phosphoserine. Residues 198 to 323 (QQKFAEELQK…YEFMTIQRLK (126 aa)) are a coiled coil. At Ser469 the chain carries Phosphoserine.

The protein is Coiled-coil domain-containing protein 138 (CCDC138) of Homo sapiens (Human).